A 290-amino-acid chain; its full sequence is Pyridoxal 5'-phosphate synthase subunit PdxS (290 aa).

Asp-22 is a binding site for D-ribose 5-phosphate. Residue Lys-79 is the Schiff-base intermediate with D-ribose 5-phosphate of the active site. Position 151 (Gly-151) interacts with D-ribose 5-phosphate. Arg-163 contributes to the D-glyceraldehyde 3-phosphate binding site. D-ribose 5-phosphate is bound by residues Gly-212 and 233–234 (GS).

Belongs to the PdxS/SNZ family. As to quaternary structure, in the presence of PdxT, forms a dodecamer of heterodimers.

The enzyme catalyses aldehydo-D-ribose 5-phosphate + D-glyceraldehyde 3-phosphate + L-glutamine = pyridoxal 5'-phosphate + L-glutamate + phosphate + 3 H2O + H(+). The protein operates within cofactor biosynthesis; pyridoxal 5'-phosphate biosynthesis. Catalyzes the formation of pyridoxal 5'-phosphate from ribose 5-phosphate (RBP), glyceraldehyde 3-phosphate (G3P) and ammonia. The ammonia is provided by the PdxT subunit. Can also use ribulose 5-phosphate and dihydroxyacetone phosphate as substrates, resulting from enzyme-catalyzed isomerization of RBP and G3P, respectively. The sequence is that of Pyridoxal 5'-phosphate synthase subunit PdxS from Clostridium botulinum (strain Langeland / NCTC 10281 / Type F).